Consider the following 346-residue polypeptide: Anthranilate phosphoribosyltransferase (346 aa).

5-phospho-alpha-D-ribose 1-diphosphate is bound by residues glycine 88, 91–92 (GD), threonine 96, 98–101 (NIST), 116–124 (KHGNRAVSS), and alanine 128. Position 88 (glycine 88) interacts with anthranilate. Serine 100 is a binding site for Mg(2+). Asparagine 119 contacts anthranilate. Arginine 174 contributes to the anthranilate binding site. 2 residues coordinate Mg(2+): aspartate 233 and glutamate 234.

Belongs to the anthranilate phosphoribosyltransferase family. Homodimer. The cofactor is Mg(2+).

The enzyme catalyses N-(5-phospho-beta-D-ribosyl)anthranilate + diphosphate = 5-phospho-alpha-D-ribose 1-diphosphate + anthranilate. It participates in amino-acid biosynthesis; L-tryptophan biosynthesis; L-tryptophan from chorismate: step 2/5. Catalyzes the transfer of the phosphoribosyl group of 5-phosphorylribose-1-pyrophosphate (PRPP) to anthranilate to yield N-(5'-phosphoribosyl)-anthranilate (PRA). In Paramagnetospirillum magneticum (strain ATCC 700264 / AMB-1) (Magnetospirillum magneticum), this protein is Anthranilate phosphoribosyltransferase.